A 393-amino-acid polypeptide reads, in one-letter code: Branched-chain-amino-acid aminotransferase, mitochondrial (393 aa).

A mitochondrion-targeting transit peptide spans 1 to 27 (MAAATLGQVWARKLLPVPWLLCGSKRC). Substrate is bound at residue Y169. K230 is subject to N6-(pyridoxal phosphate)lysine. K322 carries the post-translational modification N6-acetyllysine.

It belongs to the class-IV pyridoxal-phosphate-dependent aminotransferase family. As to quaternary structure, homodimer. Pyridoxal 5'-phosphate serves as cofactor.

It localises to the mitochondrion. It carries out the reaction L-leucine + 2-oxoglutarate = 4-methyl-2-oxopentanoate + L-glutamate. It catalyses the reaction L-isoleucine + 2-oxoglutarate = (S)-3-methyl-2-oxopentanoate + L-glutamate. The catalysed reaction is L-valine + 2-oxoglutarate = 3-methyl-2-oxobutanoate + L-glutamate. Functionally, catalyzes the first reaction in the catabolism of the essential branched chain amino acids leucine, isoleucine, and valine. May also function as a transporter of branched chain alpha-keto acids. The polypeptide is Branched-chain-amino-acid aminotransferase, mitochondrial (Bcat2) (Mus musculus (Mouse)).